The chain runs to 276 residues: Putative olfactory receptor 10J6 (276 aa).

Residues 1–25 are Extracellular-facing; the sequence is MRRKNLTEVTEFVFLGFSRFHKHHI. N-linked (GlcNAc...) asparagine glycosylation occurs at Asn5. A helical transmembrane segment spans residues 26-46; sequence TLFVVFLILYTLTVAGNAIIM. The Cytoplasmic portion of the chain corresponds to 47–54; the sequence is TIICIDRH. Residues 55–75 form a helical membrane-spanning segment; that stretch reads LHTPMYFFLSMLASSKTVYTL. Residues 76–99 are Extracellular-facing; that stretch reads FIIPQMLSSFVTQTQPISLAGCTT. A disulfide bond links Cys97 and Cys188. The helical transmembrane segment at 100-120 threads the bilayer; sequence QTFFFVTLAINNCFLLTVMGY. The Cytoplasmic segment spans residues 121–139; it reads DHYMAICNPLRYRVITSKK. A helical transmembrane segment spans residues 140-160; the sequence is VCVQLVCGAFSIGLAMAAVQV. Over 161–196 the chain is Extracellular; it reads TSIFTLPFCHTVVGHFFCDILPVMKLSCINTTINEI. Residue Asn190 is glycosylated (N-linked (GlcNAc...) asparagine). A helical transmembrane segment spans residues 197–216; sequence INFVVRLFVILVPMGLVFIS. Over 217-236 the chain is Cytoplasmic; the sequence is YVLIISTVLKIASAEGWKKT. The chain crosses the membrane as a helical span at residues 237 to 257; the sequence is FATCAFHLTVVIVHYGCASIA. The Extracellular segment spans residues 258-270; the sequence is YLMPKSENSIEQD. Residues 271–276 traverse the membrane as a helical segment; sequence LLLSVT.

The protein belongs to the G-protein coupled receptor 1 family.

The protein resides in the cell membrane. In terms of biological role, odorant receptor. This is Putative olfactory receptor 10J6 (OR10J6P) from Homo sapiens (Human).